Consider the following 494-residue polypeptide: 3-octaprenyl-4-hydroxybenzoate carboxy-lyase (494 aa).

Asparagine 172 contributes to the Mn(2+) binding site. Prenylated FMN is bound by residues 175–177 (IYR), 189–191 (RWL), and 194–195 (RG). Glutamate 238 serves as a coordination point for Mn(2+). Residue aspartate 287 is the Proton donor of the active site.

It belongs to the UbiD family. As to quaternary structure, homohexamer. Prenylated FMN serves as cofactor. Mn(2+) is required as a cofactor.

Its subcellular location is the cell membrane. It catalyses the reaction a 4-hydroxy-3-(all-trans-polyprenyl)benzoate + H(+) = a 2-(all-trans-polyprenyl)phenol + CO2. It functions in the pathway cofactor biosynthesis; ubiquinone biosynthesis. Catalyzes the decarboxylation of 3-octaprenyl-4-hydroxy benzoate to 2-octaprenylphenol, an intermediate step in ubiquinone biosynthesis. The chain is 3-octaprenyl-4-hydroxybenzoate carboxy-lyase from Escherichia coli O139:H28 (strain E24377A / ETEC).